The following is a 617-amino-acid chain: pH-sensitive chloride channel 2 (617 aa).

The first 28 residues, 1-28 (MHSPGAAAYVFLQCLVALVAAVIAQSGA), serve as a signal peptide directing secretion. Residues 29-387 (DQPPTTVVEV…VHLAREMGFY (359 aa)) lie on the Extracellular side of the membrane. N57 carries N-linked (GlcNAc...) asparagine glycosylation. Residues 82 to 96 (TVSVDSSSTTTVAST) are compositionally biased toward low complexity. Positions 82 to 110 (TVSVDSSSTTTVASTQEPTSTTERTMSPE) are disordered. Positions 97 to 106 (QEPTSTTERT) are enriched in polar residues. N-linked (GlcNAc...) asparagine glycosylation occurs at N130. The segment covering 131–147 (ATDDNRPDAKSSGKDSE) has biased composition (basic and acidic residues). The interval 131–155 (ATDDNRPDAKSSGKDSECPTLEGAD) is disordered. N-linked (GlcNAc...) asparagine glycans are attached at residues N184, N234, N351, and N370. Residues 388–408 (MMDYFIPSIMLVAISWVTFWL) form a helical membrane-spanning segment. Residues 409–414 (QADQSA) lie on the Cytoplasmic side of the membrane. A helical membrane pass occupies residues 415-434 (PRITLGTSTMLTFITLASAQ). At 435–447 (GKTLPKVSYIKAS) the chain is on the extracellular side. A helical membrane pass occupies residues 448-468 (EIWFLGCTGFIFGSLVEFAFV). Residues 469–596 (NTIWRRKRNV…VAIWIDKRSR (128 aa)) lie on the Cytoplasmic side of the membrane. A helical transmembrane segment spans residues 597 to 617 (FVFPIAFVIFNIFYWTFVYYV).

It belongs to the ligand-gated ion channel (TC 1.A.9) family.

It localises to the cell membrane. It catalyses the reaction chloride(in) = chloride(out). Functionally, ligand and pH-gated channel that mediates chloride transport in the mid-gut and thereby may function in larval metabolism and fluid homeostasis. Channel opening is triggered by zinc binding or, to a lesser extent, an increase in extracellular pH. In Anopheles gambiae (African malaria mosquito), this protein is pH-sensitive chloride channel 2.